The following is an 856-amino-acid chain: Alginate lyase 7 (856 aa).

8 PbH1 repeats span residues 133–155, 157–179, 180–202, 204–226, 234–256, 257–279, 280–304, and 320–342; these read DYNV…DPHE, TINL…VADF, QIGA…NIVT, SHDI…VVQR, VYNV…LIKM, STDV…RVQG, VEDV…EVIV, and TQNV…GIQE. 9 Hemolysin-type calcium-binding repeats span residues 387-402, 404-421, 422-439, 538-549, 554-563, 565-581, 582-599, 715-731, and 733-749; these read GSTG…IADL, VGGS…NDVL, EGGA…ADIF, GTEGDDSLTGNA, LDGGSGNDSL, GGLG…DDIL, NGGL…ADIF, GGAG…DDIL, and GGSE…ADVF.

This sequence belongs to the D-mannuronate C5-epimerase family. Ca(2+) serves as cofactor.

It is found in the secreted. The catalysed reaction is Eliminative cleavage of alginate to give oligosaccharides with 4-deoxy-alpha-L-erythro-hex-4-enuronosyl groups at their non-reducing ends and beta-D-mannuronate at their reducing end.. The enzyme catalyses [(1-&gt;4)-beta-D-mannuronosyl](n) = [alginate](n). It participates in glycan biosynthesis; alginate biosynthesis. Inhibited by zinc. Converts beta-D-mannuronic acid (M) to alpha-L-guluronic acid (G). Has both epimerase and lyase activities. Contributes to abortive encystment by degrading the coat from inside the cyst. Important for cyst germination. The polypeptide is Alginate lyase 7 (Azotobacter vinelandii).